The chain runs to 192 residues: A-type ATP synthase subunit E (192 aa).

The interval 1–66 is disordered; that stretch reads MSLDTVVEDI…QERDQKLSSA (66 aa). Over residues 8–26 the composition is skewed to basic and acidic residues; it reads EDIRDEARARADEIRSEGE. Positions 27–49 are enriched in acidic residues; it reads ERAEEIIDEAEREADDIVDEAER. A compositionally biased stretch (basic and acidic residues) spans 50–66; sequence EAERKISQERDQKLSSA.

Belongs to the V-ATPase E subunit family. In terms of assembly, has multiple subunits with at least A(3), B(3), C, D, E, F, H, I and proteolipid K(x).

It is found in the cell membrane. In terms of biological role, component of the A-type ATP synthase that produces ATP from ADP in the presence of a proton gradient across the membrane. This Natronomonas pharaonis (strain ATCC 35678 / DSM 2160 / CIP 103997 / JCM 8858 / NBRC 14720 / NCIMB 2260 / Gabara) (Halobacterium pharaonis) protein is A-type ATP synthase subunit E.